The chain runs to 364 residues: D-alanine--D-alanine ligase (364 aa).

Residues R134–N347 form the ATP-grasp domain. Residue A167–E222 coordinates ATP. Mg(2+) is bound by residues D300, E314, and N316.

This sequence belongs to the D-alanine--D-alanine ligase family. The cofactor is Mg(2+). Mn(2+) is required as a cofactor.

The protein localises to the cytoplasm. It carries out the reaction 2 D-alanine + ATP = D-alanyl-D-alanine + ADP + phosphate + H(+). The protein operates within cell wall biogenesis; peptidoglycan biosynthesis. In terms of biological role, cell wall formation. This is D-alanine--D-alanine ligase from Legionella pneumophila (strain Paris).